The sequence spans 328 residues: Pantothenate kinase (328 aa).

Over residues 1-12 (MAAPLNAQTRAP) the composition is skewed to polar residues. The interval 1-22 (MAAPLNAQTRAPQATGRAPDFS) is disordered. Position 113 to 120 (113 to 120 (GSVAVGKS)) interacts with ATP.

This sequence belongs to the prokaryotic pantothenate kinase family.

It is found in the cytoplasm. It catalyses the reaction (R)-pantothenate + ATP = (R)-4'-phosphopantothenate + ADP + H(+). Its pathway is cofactor biosynthesis; coenzyme A biosynthesis; CoA from (R)-pantothenate: step 1/5. The sequence is that of Pantothenate kinase from Corynebacterium efficiens (strain DSM 44549 / YS-314 / AJ 12310 / JCM 11189 / NBRC 100395).